The primary structure comprises 255 residues: MAVGKNKRLSKGKKGLKKRTQDPFSRKDEYSVKAPSTFAIRDVGKTLVNRTTGLKNANDSLKGRIFEVSLADLQNDEDHAFRKVKLRVDEVQGKNCLTNFHGLDFTSDKLRSLVRKWQTLIEANVTVKTTDDYLLRLFAIAFTKRRPNQIKKTTYARSSQIRAIRKKITEIIQREASTRTLAQLTKLIPEVIGREIEKATHGIYPLQNVHIRKVKLLKSPKFDLGALLALHGESSTDDKGQKVEREFKEQVLESV.

Residues 1-18 (MAVGKNKRLSKGKKGLKK) show a composition bias toward basic residues. Positions 1-28 (MAVGKNKRLSKGKKGLKKRTQDPFSRKD) are disordered. N-acetylalanine; partial is present on A2. Basic and acidic residues predominate over residues 19–28 (RTQDPFSRKD).

The protein belongs to the eukaryotic ribosomal protein eS1 family. Component of the small ribosomal subunit. Mature ribosomes consist of a small (40S) and a large (60S) subunit. The 40S subunit contains about 33 different proteins and 1 molecule of RNA (18S). The 60S subunit contains about 49 different proteins and 3 molecules of RNA (25S, 5.8S and 5S).

It is found in the cytoplasm. This is Small ribosomal subunit protein eS1 from Ajellomyces dermatitidis (strain ER-3 / ATCC MYA-2586) (Blastomyces dermatitidis).